The sequence spans 130 residues: Small ribosomal subunit protein uS8 (130 aa).

It belongs to the universal ribosomal protein uS8 family. As to quaternary structure, part of the 30S ribosomal subunit.

In terms of biological role, one of the primary rRNA binding proteins, it binds directly to 16S rRNA central domain where it helps coordinate assembly of the platform of the 30S subunit. In Caldivirga maquilingensis (strain ATCC 700844 / DSM 13496 / JCM 10307 / IC-167), this protein is Small ribosomal subunit protein uS8.